Reading from the N-terminus, the 350-residue chain is Transmembrane protein 185A (350 aa).

A run of 7 helical transmembrane segments spans residues 16 to 36 (LIYA…DGII), 41 to 61 (WAVF…ASVG), 81 to 101 (FKAM…EVLV), 111 to 131 (FWLL…AACV), 177 to 197 (ILMS…VLFL), 211 to 231 (ITMA…EILL), and 240 to 260 (AFSC…LMAT). The mediates interaction with MAP1B stretch occupies residues 298–350 (DLHHEDNEETEETPVPEPPKIAPMFRKKARVVITQSPGKYVLPPPKLNIEMPD).

Belongs to the TMEM185 family. In terms of assembly, interacts with MAP1B.

The protein resides in the cell projection. Its subcellular location is the dendrite. It localises to the membrane. In Homo sapiens (Human), this protein is Transmembrane protein 185A (TMEM185A).